A 386-amino-acid chain; its full sequence is Phosphoglycerate kinase (386 aa).

Substrate-binding positions include 21–23 (DLN), Arg-36, 59–62 (HLGR), Arg-112, and Arg-145. ATP-binding positions include Lys-196, Glu-313, and 339 to 342 (GGDT).

It belongs to the phosphoglycerate kinase family. In terms of assembly, monomer.

Its subcellular location is the cytoplasm. The catalysed reaction is (2R)-3-phosphoglycerate + ATP = (2R)-3-phospho-glyceroyl phosphate + ADP. It functions in the pathway carbohydrate degradation; glycolysis; pyruvate from D-glyceraldehyde 3-phosphate: step 2/5. In Haemophilus influenzae (strain 86-028NP), this protein is Phosphoglycerate kinase.